The primary structure comprises 202 residues: MVARRAAGSCPAHIAAGRLGEEAACAYLAASGMRILARNWRAGHLELDIIAQDNGTIVFAEVKTRAARGLESPHEALTPAKRSRLVRAAGMWLSSNDMWDRPCRFDLVCVTTEARAPEPEQMSLQAARAAGTAQARRAAGSGLPGILGKAASRLFGAGSPQRSHRAGGAPDSPEQLLRVEHIPHAFDLSESLGGGDAAWQPW.

The protein belongs to the UPF0102 family.

The protein is UPF0102 protein Dde_1093 of Oleidesulfovibrio alaskensis (strain ATCC BAA-1058 / DSM 17464 / G20) (Desulfovibrio alaskensis).